The following is a 339-amino-acid chain: MAIKVSIDASGGDYGIPVTIVAGIKALNIFQDLHLYFVGNEPSITTELGKYPSNTLNSRYTIIHASEVVLMNESPAIALRKKKDSSMRIAINLVKTFKADACVSAGNTGALMAISRFVLRTIKGIDRPAIMGRMPTITGHTHMLDLGANVDSKPKALVEFATMGSIAVKHTENIESPTIGLLNIGEEDMKGSEKIRKAATLLKASNLNYVGFVEGNDIYKGIVDLIVCDGFEGNIALKASEGVASMMEHYLKQAFTRNLLTKLVSLIAIPVLKDFKSSLNPDKYNGASLLGLRGIVVKSHGSANIDSFLTAITEAYIEAHAKISDKISLQISKELEHNE.

It belongs to the PlsX family. Homodimer. Probably interacts with PlsY.

The protein resides in the cytoplasm. The enzyme catalyses a fatty acyl-[ACP] + phosphate = an acyl phosphate + holo-[ACP]. The protein operates within lipid metabolism; phospholipid metabolism. Catalyzes the reversible formation of acyl-phosphate (acyl-PO(4)) from acyl-[acyl-carrier-protein] (acyl-ACP). This enzyme utilizes acyl-ACP as fatty acyl donor, but not acyl-CoA. In Vesicomyosocius okutanii subsp. Calyptogena okutanii (strain HA), this protein is Phosphate acyltransferase.